The following is a 216-amino-acid chain: MTDHKPSKSLPKATAKRLPQYYRLFKSLVEENVTRTNSQLISEKIGVDAATIRRDFSLFGELGRRGYGYETKVLRDFFGELLGQDQETHIALIGVGNLGRALLHYQFQDRNKMRITQAYDISGNPLVGTQTDDGIPIYNISDLEKNVKKSDIKTAILSVRKENAQEVVDTLVKAGIKVSLNFAPIRLKVPSDVVVQSIDLTKELQTLLFFMNDNKQ.

A DNA-binding region (H-T-H motif) is located at residues 20–59; it reads QYYRLFKSLVEENVTRTNSQLISEKIGVDAATIRRDFSLF. 94–99 is an NAD(+) binding site; the sequence is GVGNLG.

Belongs to the transcriptional regulatory Rex family. Homodimer.

The protein localises to the cytoplasm. Functionally, modulates transcription in response to changes in cellular NADH/NAD(+) redox state. This is Redox-sensing transcriptional repressor Rex from Lactococcus lactis subsp. lactis (strain IL1403) (Streptococcus lactis).